The chain runs to 398 residues: MSIDLSLPELPILHPRITVVGVGGAGGNAVNNMIQSNLQGVNFVVANTDAQALEKSLCDKKIQLGINLTKGLGAGALPDVGKGAAEESIDEIMEHIKDSHMLFITAGMGGGTGTGAAPVIAKAAREARAAVKDRAPKEKKILTVGVVTKPFGFEGVRRMPIAELGLEELQKYVDTLIVIPNQNLFRIANEKTTFSDAFKLADNVLHIGIRGVTDLMVMPGLINLDFADIETVMSEMGKAMIGTGEAEGEDRAISAAEAAISNPLLDNVSMKGAQGILINITGGGDMTLFEVDAAANRVREEVDENANIIFGATFDQAMEGRVRVSVLATGIDGRNNKSETSPISQSEDSEKEKFKWPYSQSESTQDKTLETKPAEQVSEGAKWGSNIYDIPAYLRRKK.

GTP is bound by residues 24–28 (GAGGN), 111–113 (GTG), Glu-154, Arg-158, and Asp-202. The tract at residues 333–381 (GRNNKSETSPISQSEDSEKEKFKWPYSQSESTQDKTLETKPAEQVSEGA) is disordered. The span at 364–373 (TQDKTLETKP) shows a compositional bias: basic and acidic residues.

The protein belongs to the FtsZ family. In terms of assembly, homodimer. Polymerizes to form a dynamic ring structure in a strictly GTP-dependent manner. Interacts directly with several other division proteins.

The protein localises to the cytoplasm. In terms of biological role, essential cell division protein that forms a contractile ring structure (Z ring) at the future cell division site. The regulation of the ring assembly controls the timing and the location of cell division. One of the functions of the FtsZ ring is to recruit other cell division proteins to the septum to produce a new cell wall between the dividing cells. Binds GTP and shows GTPase activity. The polypeptide is Cell division protein FtsZ (Wolbachia sp).